Reading from the N-terminus, the 352-residue chain is tRNA pseudouridine synthase D (352 aa).

Asp-81 serves as the catalytic Nucleophile. The TRUD domain occupies 157-303 (GVPNYFGLQR…MAHERRILRL (147 aa)).

The protein belongs to the pseudouridine synthase TruD family.

The catalysed reaction is uridine(13) in tRNA = pseudouridine(13) in tRNA. In terms of biological role, responsible for synthesis of pseudouridine from uracil-13 in transfer RNAs. In Ectopseudomonas mendocina (strain ymp) (Pseudomonas mendocina), this protein is tRNA pseudouridine synthase D.